Consider the following 813-residue polypeptide: Disintegrin and metalloproteinase domain-containing protein 33 (813 aa).

The N-terminal stretch at 1–29 (MGWRPRRARGTPLLLLLLLLLLWPVPGAG) is a signal peptide. A propeptide spanning residues 30–203 (VLQGHIPGQP…PGGPQSRGRR (174 aa)) is cleaved from the precursor. Over 30–701 (VLQGHIPGQP…GPVQAENHDT (672 aa)) the chain is Extracellular. Asn-109 is a glycosylation site (N-linked (GlcNAc...) asparagine). Residues 131 to 138 (CTCSGMSG) carry the Cysteine switch motif. Residue Cys-133 coordinates Zn(2+). Asn-145 carries N-linked (GlcNAc...) asparagine glycosylation. The tract at residues 184–205 (PGNKAGMTSLPGGPQSRGRREA) is disordered. One can recognise a Peptidase M12B domain in the interval 210–409 (KYLELYIVAD…GGGACLSNAP (200 aa)). 2 N-linked (GlcNAc...) asparagine glycosylation sites follow: Asn-231 and Asn-276. 3 cysteine pairs are disulfide-bonded: Cys-320–Cys-404, Cys-360–Cys-388, and Cys-361–Cys-371. Residue His-345 coordinates Zn(2+). Glu-346 is an active-site residue. Zn(2+)-binding residues include His-349 and His-355. In terms of domain architecture, Disintegrin spans 417–503 (PALCGNGFVE…HCPPDVYLLD (87 aa)). Asn-448 is a glycosylation site (N-linked (GlcNAc...) asparagine). 4 cysteine pairs are disulfide-bonded: Cys-475–Cys-495, Cys-653–Cys-663, Cys-657–Cys-669, and Cys-671–Cys-680. An EGF-like domain is found at 649–681 (ELQRCLTACHSHGVCNSNHNCHCAPGWAPPFCD). The helical transmembrane segment at 702 to 722 (FLLAMLLSVLLPLLPGAGLAW) threads the bilayer. At 723 to 813 (CCYRLPGAHL…QVQMPRSCLW (91 aa)) the chain is on the cytoplasmic side. The tract at residues 746–813 (SGPKDGPHRD…QVQMPRSCLW (68 aa)) is disordered. A compositionally biased stretch (basic and acidic residues) spans 780 to 791 (ENSHEPSSHPEK).

The cofactor is Zn(2+). Post-translationally, the precursor is cleaved by a furin endopeptidase. As to expression, expressed in all tissues, except liver, with high expression in placenta, lung, spleen and veins.

It is found in the membrane. This chain is Disintegrin and metalloproteinase domain-containing protein 33 (ADAM33), found in Homo sapiens (Human).